A 352-amino-acid chain; its full sequence is C-C chemokine receptor type 5 (352 aa).

Residues 1-30 (MDYEVSSPIYDIDYGASEPCQKIDVKQMGA) are Extracellular-facing. Y3 carries the sulfotyrosine modification. O-linked (GalNAc...) serine glycans are attached at residues S6 and S7. Sulfotyrosine occurs at positions 10 and 14. 2 cysteine pairs are disulfide-bonded: C20/C269 and C101/C178. The helical transmembrane segment at 31-58 (QLLPPLYSMVFLFGFVGNMLVVLILINC) threads the bilayer. At 59-68 (KRLKSMTDIY) the chain is on the cytoplasmic side. A helical transmembrane segment spans residues 69–89 (LLNLAISDLFFLFTVPFWAHY). The Extracellular segment spans residues 90 to 102 (AAGQWDFGNTMCQ). A helical membrane pass occupies residues 103-124 (FLTGLYFIGFFSGIFFIILLTI). Residues 125–141 (DRYLAIVHAVFALKART) are Cytoplasmic-facing. Residues 142–166 (VTFGVVTSVITWVVAVFASLPGIIF) traverse the membrane as a helical segment. At 167-198 (TRSQKEGYHYTCSPHFPFGQYRFWKNLETLKM) the chain is on the extracellular side. The chain crosses the membrane as a helical span at residues 199-218 (VILGLVLPLLVMVICYSGIL). Residues 219 to 235 (KTLLRCRNEKKRHRAVR) are Cytoplasmic-facing. A helical transmembrane segment spans residues 236-260 (LIFTIMIVYFLFWAPYNIVLLLNTY). Over 261-277 (QEFFGLNNCSSSNRLDQ) the chain is Extracellular. A helical membrane pass occupies residues 278-301 (AMQVTETLGMTHCCVNPIIYAFVG). Residues 302–352 (EKFRNYLLVFFQKHIAKRFCKCCSIFQKEAPERANSVYTRSTGEQEISVGL) lie on the Cytoplasmic side of the membrane. Residues C321, C323, and C324 are each lipidated (S-palmitoyl cysteine). S337, S342, and S349 each carry phosphoserine; by BARK1.

The protein belongs to the G-protein coupled receptor 1 family. Interacts with PRAF2. Efficient ligand binding to CCL3/MIP-1alpha and CCL4/MIP-1beta requires sulfation, O-glycosylation and sialic acid modifications. Glycosylation on Ser-6 is required for efficient binding of CCL4. Interacts with GRK2. Interacts with ARRB1 and ARRB2. Interacts with CNIH4. Interacts with S100A4; this interaction stimulates T-lymphocyte chemotaxis. Post-translationally, sulfated on at least 2 of the N-terminal tyrosines. Sulfation is required for efficient binding of the chemokines, CCL3 and CCL4. Palmitoylation in the C-terminal is important for cell surface expression. In terms of processing, phosphorylation on serine residues in the C-terminal is stimulated by binding CC chemokines especially by APO-RANTES. Post-translationally, O-glycosylated, but not N-glycosylated. Ser-6 appears to be the major site even if Ser-7 may be also O-glycosylated. Also sialylated glycans present which contribute to chemokine binding. Ser-17 may also be glycosylated and, if so, with small moieties such as a T-antigen.

The protein localises to the cell membrane. In terms of biological role, receptor for a number of inflammatory CC-chemokines including CCL3/MIP-1-alpha, CCL4/MIP-1-beta and RANTES and subsequently transduces a signal by increasing the intracellular calcium ion level. May play a role in the control of granulocytic lineage proliferation or differentiation. Participates in T-lymphocyte migration to the infection site by acting as a chemotactic receptor. The polypeptide is C-C chemokine receptor type 5 (CCR5) (Plecturocebus moloch (Dusky titi monkey)).